The following is a 597-amino-acid chain: Sulfite reductase [NADPH] flavoprotein alpha-component (597 aa).

Residues 62–200 (VTVLSASQTG…TADKWIQDVV (139 aa)) form the Flavodoxin-like domain. Residues 68–73 (SQTGNA), 115–118 (STQG), and 151–160 (LGDTSYPNFC) contribute to the FMN site. In terms of domain architecture, FAD-binding FR-type spans 232–446 (ENPYTAKLIT…VEPNDNFRLP (215 aa)). FAD is bound by residues T320, N354, 384 to 387 (RLYS), 402 to 404 (SVG), and 417 to 420 (GVAS). NADP(+) is bound by residues 517 to 518 (SR), 523 to 527 (KIYVQ), and D559. Y597 contributes to the FAD binding site.

It belongs to the NADPH-dependent sulphite reductase flavoprotein subunit CysJ family. In the N-terminal section; belongs to the flavodoxin family. The protein in the C-terminal section; belongs to the flavoprotein pyridine nucleotide cytochrome reductase family. Alpha(8)-beta(8). The alpha component is a flavoprotein, the beta component is a hemoprotein. FAD is required as a cofactor. The cofactor is FMN.

The enzyme catalyses hydrogen sulfide + 3 NADP(+) + 3 H2O = sulfite + 3 NADPH + 4 H(+). It participates in sulfur metabolism; hydrogen sulfide biosynthesis; hydrogen sulfide from sulfite (NADPH route): step 1/1. Component of the sulfite reductase complex that catalyzes the 6-electron reduction of sulfite to sulfide. This is one of several activities required for the biosynthesis of L-cysteine from sulfate. The flavoprotein component catalyzes the electron flow from NADPH -&gt; FAD -&gt; FMN to the hemoprotein component. The polypeptide is Sulfite reductase [NADPH] flavoprotein alpha-component (Mannheimia succiniciproducens (strain KCTC 0769BP / MBEL55E)).